Consider the following 586-residue polypeptide: Madf and zinc finger protein 1 (586 aa).

Positions 161–194 (FMSEDDLAPPRKPGRPPRRTRPGQVFKFKVSFIR) are involved in interaction with Cp190. Positions 201-292 (HLIQAYKEHP…KCEFLSVAPV (92 aa)) form a DNA-binding region, MADF 1. Residues 294–319 (TPRENEEDNDLTAIKLNFKEENLITT) are involved in interaction with Cp190. The MADF 2 DNA-binding region spans 320 to 413 (SFIETYANYP…MCSFLPAKGS (94 aa)). C2H2-type zinc fingers lie at residues 418-441 (LYCD…VKAH), 448-471 (YLCS…LRSH), 476-498 (LKCQ…TLIH), 504-527 (HVCD…NGVH), 533-555 (YSCN…IKGH), and 561-583 (KKCE…RRSH).

Interacts (via regions flanking MADF domain 1) with Cp190 (via regions between the BTB domain and first zinc finger domain); the interaction is probably direct and is essential for protein function.

It localises to the nucleus. The protein localises to the chromosome. It is found in the nucleoplasm. Chromatin-binding protein involved in the organization of active promoters and insulators. Essential for the activity of heterochromatin promoters; primarily binds to specific motifs within promoters of housekeeping genes. May also associate to a lesser extent with promoters in euchromatin. Mediates recruitment of Cp190, a multifunctional protein involved in the recruitment of transcription complexes, the creation of open chromatin regions and the activity of insulators. Cooperates with pita and su(Hw) to recruit Cp190 and regulate insulator function at the front-ultraabdominal (Fub) boundary. May cooperate with other C2H2 zinc finger proteins, such as M1BP, to recruit CP190 to promoters. May be involved in cellular organization and development of the eye. The protein is Madf and zinc finger protein 1 of Drosophila melanogaster (Fruit fly).